A 511-amino-acid chain; its full sequence is 2,3-bisphosphoglycerate-independent phosphoglycerate mutase (511 aa).

Residue Asp12 coordinates Mn(2+). Tyr36 bears the Phosphotyrosine mark. Ser62 serves as a coordination point for Mn(2+). The active-site Phosphoserine intermediate is the Ser62. Residues His123, 153-154 (RD), Arg185, Arg191, 261-264 (RPDR), and Lys336 contribute to the substrate site. Mn(2+) contacts are provided by Asp403, His407, Asp444, His445, and His462.

The protein belongs to the BPG-independent phosphoglycerate mutase family. As to quaternary structure, monomer. Mn(2+) serves as cofactor.

The catalysed reaction is (2R)-2-phosphoglycerate = (2R)-3-phosphoglycerate. It participates in carbohydrate degradation; glycolysis; pyruvate from D-glyceraldehyde 3-phosphate: step 3/5. Functionally, essential for rapid growth and for sporulation. Catalyzes the interconversion of 2-phosphoglycerate and 3-phosphoglycerate. In Bacillus velezensis (strain DSM 23117 / BGSC 10A6 / LMG 26770 / FZB42) (Bacillus amyloliquefaciens subsp. plantarum), this protein is 2,3-bisphosphoglycerate-independent phosphoglycerate mutase.